Reading from the N-terminus, the 523-residue chain is 2-isopropylmalate synthase (523 aa).

Residues 5–267 form the Pyruvate carboxyltransferase domain; the sequence is VIIFDTTLRD…HTAINHQEIW (263 aa). Mn(2+) is bound by residues Asp14, His202, His204, and Asn238. The tract at residues 392–523 is regulatory domain; sequence RLDYFSVQSG…QHNENNKETV (132 aa).

This sequence belongs to the alpha-IPM synthase/homocitrate synthase family. LeuA type 1 subfamily. In terms of assembly, homodimer. Mn(2+) is required as a cofactor.

The protein resides in the cytoplasm. It catalyses the reaction 3-methyl-2-oxobutanoate + acetyl-CoA + H2O = (2S)-2-isopropylmalate + CoA + H(+). Its pathway is amino-acid biosynthesis; L-leucine biosynthesis; L-leucine from 3-methyl-2-oxobutanoate: step 1/4. Functionally, catalyzes the condensation of the acetyl group of acetyl-CoA with 3-methyl-2-oxobutanoate (2-ketoisovalerate) to form 3-carboxy-3-hydroxy-4-methylpentanoate (2-isopropylmalate). The sequence is that of 2-isopropylmalate synthase from Shigella flexneri serotype 5b (strain 8401).